The primary structure comprises 831 residues: Heat shock 70 kDa protein 14 (831 aa).

2 disordered regions span residues 503–579 (EEVE…KKKV) and 786–831 (TKPK…EGST). The segment covering 509–526 (VTKEHSEETTKMDSDKAS) has biased composition (basic and acidic residues). Serine 533 carries the phosphoserine modification.

Belongs to the heat shock protein 70 (TC 1.A.33) family. HSP110/SSE subfamily. As to quaternary structure, interacts with HTT1 in both cytoplasm and nucleus. Constitutively expressed.

The protein localises to the cytoplasm. It is found in the nucleus. Functionally, in cooperation with other chaperones, Hsp70s are key components that facilitate folding of de novo synthesized proteins, assist translocation of precursor proteins into organelles, and are responsible for degradation of damaged protein under stress conditions. The chain is Heat shock 70 kDa protein 14 (HSP70-14) from Arabidopsis thaliana (Mouse-ear cress).